The sequence spans 828 residues: Translation initiation factor IF-2 (828 aa).

Disordered regions lie at residues 48 to 76 (SYSG…SEEF) and 112 to 137 (ASQE…EPKI). Positions 49-58 (YSGSTTTLSL) are enriched in polar residues. Positions 65 to 74 (LETGSSSGSE) are enriched in low complexity. The span at 116–126 (DPIEVEQEESS) shows a compositional bias: acidic residues. Basic and acidic residues predominate over residues 127–137 (DTNKVKEEPKI). The tr-type G domain occupies 326-496 (SRAPVVTVMG…LLIAEMQNLK (171 aa)). The tract at residues 335–342 (GHVDHGKT) is G1. 335-342 (GHVDHGKT) contacts GTP. Residues 360–364 (GITQH) form a G2 region. Residues 382–385 (DTPG) are G3. Residues 382-386 (DTPGH) and 436-439 (NKID) each bind GTP. The segment at 436 to 439 (NKID) is G4. The G5 stretch occupies residues 472 to 474 (SAL).

Belongs to the TRAFAC class translation factor GTPase superfamily. Classic translation factor GTPase family. IF-2 subfamily.

The protein localises to the cytoplasm. Its function is as follows. One of the essential components for the initiation of protein synthesis. Protects formylmethionyl-tRNA from spontaneous hydrolysis and promotes its binding to the 30S ribosomal subunits. Also involved in the hydrolysis of GTP during the formation of the 70S ribosomal complex. This Rickettsia bellii (strain RML369-C) protein is Translation initiation factor IF-2.